A 204-amino-acid polypeptide reads, in one-letter code: Cold and drought-regulated protein CORA (204 aa).

Tandem repeats lie at residues 54–59, 65–70, 71–76, 78–83, 85–90, 98–100, 101–103, 112–114, 115–117, 126–128, 129–131, 164–169, 171–176, 178–180, 181–183, 184–186, 187–189, and 190–192. A 7 X 6 AA repeats of Y-N-H-G-G-G region spans residues 54–176; that stretch reads YNHGGGYNGG…GGGGYNHGGG (123 aa). The interval 98–192 is 11 X 3 AA repeats of H-G-G; that stretch reads HGGHGGGGYN…GHGGHGGHGG (95 aa). Positions 169–194 are enriched in gly residues; the sequence is GGYNHGGGGHGGHGGHGGHGGHGGHG. The tract at residues 169 to 204 is disordered; the sequence is GGYNHGGGGHGGHGGHGGHGGHGGHGAVQTEDNTQN.

This sequence belongs to the GRP family.

May be involved in resistance of the plant to environmental stress. The polypeptide is Cold and drought-regulated protein CORA (CORA) (Medicago sativa (Alfalfa)).